The following is a 371-amino-acid chain: Histidinol-phosphate aminotransferase (371 aa).

The residue at position 228 (K228) is an N6-(pyridoxal phosphate)lysine.

It belongs to the class-II pyridoxal-phosphate-dependent aminotransferase family. Histidinol-phosphate aminotransferase subfamily. Pyridoxal 5'-phosphate is required as a cofactor.

It catalyses the reaction L-histidinol phosphate + 2-oxoglutarate = 3-(imidazol-4-yl)-2-oxopropyl phosphate + L-glutamate. It participates in amino-acid biosynthesis; L-histidine biosynthesis; L-histidine from 5-phospho-alpha-D-ribose 1-diphosphate: step 7/9. This is Histidinol-phosphate aminotransferase from Methanococcus maripaludis (strain C6 / ATCC BAA-1332).